Consider the following 313-residue polypeptide: Esterase mpl1 (313 aa).

Catalysis depends on charge relay system residues Ser-174, Asp-259, and His-287.

This sequence belongs to the LovG family.

Its pathway is mycotoxin biosynthesis. In terms of biological role, esterase; part of the gene cluster that mediates the biosynthesis of the mycotoxin citrinin, a hepato-nephrotoxic compound to humans due to inhibition of respiration complex III. The pathway begins with the synthesis of a keto-aldehyde intermediate by the citrinin PKS (pksCT) from successive condensations of 4 malonyl-CoA units, presumably with a simple acetyl-CoA starter unit. Release of the keto-aldehyde intermediate is consistent with the presence of the C-terminal reductive release domain. Mp11 collaborates with pksCT by catalyzing the hydrolysis of ACP-bound acyl intermediates to free the ACP from stalled intermediates. Mpl2 then catalyzes the oxidation of the C-12 methyl of the ketone intermediate to an alcohol intermediate which is further oxidized by the oxidoreductase mpl7 to produce a bisaldehyde intermediate. The fourth catalytic step is catalyzed by the mpl4 aldehyde dehydrogenase. The final transformation is the reduction of C-3 by mpl6 to provide the chemically stable citrinin nucleus. In Monascus purpureus (Red mold), this protein is Esterase mpl1.